The primary structure comprises 480 residues: tRNA-2-methylthio-N(6)-dimethylallyladenosine synthase (480 aa).

The MTTase N-terminal domain occupies 43-161 (KLYCLNTFGC…FPELLYSAMD (119 aa)). The [4Fe-4S] cluster site is built by cysteine 52, cysteine 88, cysteine 122, cysteine 198, cysteine 202, and cysteine 205. The 231-residue stretch at 184–414 (RKDGVKAWVT…LETQNRISKE (231 aa)) folds into the Radical SAM core domain. The TRAM domain occupies 417–480 (DTFLGKVVEV…TWSLEGSIVR (64 aa)).

Belongs to the methylthiotransferase family. MiaB subfamily. Monomer. Requires [4Fe-4S] cluster as cofactor.

It localises to the cytoplasm. It carries out the reaction N(6)-dimethylallyladenosine(37) in tRNA + (sulfur carrier)-SH + AH2 + 2 S-adenosyl-L-methionine = 2-methylsulfanyl-N(6)-dimethylallyladenosine(37) in tRNA + (sulfur carrier)-H + 5'-deoxyadenosine + L-methionine + A + S-adenosyl-L-homocysteine + 2 H(+). Functionally, catalyzes the methylthiolation of N6-(dimethylallyl)adenosine (i(6)A), leading to the formation of 2-methylthio-N6-(dimethylallyl)adenosine (ms(2)i(6)A) at position 37 in tRNAs that read codons beginning with uridine. The sequence is that of tRNA-2-methylthio-N(6)-dimethylallyladenosine synthase from Acetivibrio thermocellus (strain ATCC 27405 / DSM 1237 / JCM 9322 / NBRC 103400 / NCIMB 10682 / NRRL B-4536 / VPI 7372) (Clostridium thermocellum).